The sequence spans 333 residues: tRNA N6-adenosine threonylcarbamoyltransferase (333 aa).

The Fe cation site is built by His118 and His122. Substrate contacts are provided by residues 140 to 144, Asp173, Gly186, and Asn274; that span reads VVSGG. Asp298 is a Fe cation binding site.

It belongs to the KAE1 / TsaD family. The cofactor is Fe(2+).

Its subcellular location is the cytoplasm. It catalyses the reaction L-threonylcarbamoyladenylate + adenosine(37) in tRNA = N(6)-L-threonylcarbamoyladenosine(37) in tRNA + AMP + H(+). In terms of biological role, required for the formation of a threonylcarbamoyl group on adenosine at position 37 (t(6)A37) in tRNAs that read codons beginning with adenine. Is involved in the transfer of the threonylcarbamoyl moiety of threonylcarbamoyl-AMP (TC-AMP) to the N6 group of A37, together with TsaE and TsaB. TsaD likely plays a direct catalytic role in this reaction. This Deinococcus geothermalis (strain DSM 11300 / CIP 105573 / AG-3a) protein is tRNA N6-adenosine threonylcarbamoyltransferase.